A 225-amino-acid polypeptide reads, in one-letter code: UPF0502 protein Ajs_3392 (225 aa).

Belongs to the UPF0502 family.

This chain is UPF0502 protein Ajs_3392, found in Acidovorax sp. (strain JS42).